Reading from the N-terminus, the 144-residue chain is UPF0306 protein Spro_0510 (144 aa).

This sequence belongs to the UPF0306 family.

The protein is UPF0306 protein Spro_0510 of Serratia proteamaculans (strain 568).